A 102-amino-acid polypeptide reads, in one-letter code: Large ribosomal subunit protein uL23c (102 aa).

The protein belongs to the universal ribosomal protein uL23 family. In terms of assembly, part of the 50S ribosomal subunit.

Its subcellular location is the plastid. It localises to the chloroplast. In terms of biological role, binds to 23S rRNA. The polypeptide is Large ribosomal subunit protein uL23c (rpl23) (Phaeodactylum tricornutum (strain CCAP 1055/1)).